Here is a 270-residue protein sequence, read N- to C-terminus: uncharacterized protein (270 aa).

10 consecutive transmembrane segments (helical) span residues 12–32 (AAIVLSAVLMGTVSVFVRNVG), 35–55 (TLSVTFLRLFFGFLAVLPFCL), 64–84 (TLLGLAVFNFLTVASYIAAIQ), 88–108 (VAMAALLLYMAPVYVIPLSVL), 117–137 (TLLALPLGLIGLYLMLTPYAE), 138–158 (LTFGIIFGIVSGLSYAIVFVL), 171–191 (ITFYNLGLGSAALLPYFLMFG), 194–214 (GSWLWAIGLGVVPTAVPFVLF), 226–246 (APILALIEPLCAGLVGYFYFG), and 248–268 (TLTLTQLIGGAMILAGVLIAW). 2 consecutive EamA domains span residues 19–133 (VLMG…LMLT) and 150–269 (LSYA…IAWR).

It belongs to the EamA transporter family.

The protein localises to the cell membrane. This is an uncharacterized protein from Archaeoglobus fulgidus (strain ATCC 49558 / DSM 4304 / JCM 9628 / NBRC 100126 / VC-16).